The chain runs to 104 residues: Large ribosomal subunit protein bL21 (104 aa).

This sequence belongs to the bacterial ribosomal protein bL21 family. Part of the 50S ribosomal subunit. Contacts protein L20.

Its function is as follows. This protein binds to 23S rRNA in the presence of protein L20. The protein is Large ribosomal subunit protein bL21 of Leptospira borgpetersenii serovar Hardjo-bovis (strain JB197).